A 160-amino-acid polypeptide reads, in one-letter code: Phosphopantetheine adenylyltransferase (160 aa).

S8 provides a ligand contact to substrate. Residues 8 to 9 (SF) and H16 contribute to the ATP site. K40, T72, and R86 together coordinate substrate. ATP contacts are provided by residues 87 to 89 (GLR), E97, and 122 to 128 (YSFLSSS).

The protein belongs to the bacterial CoaD family. As to quaternary structure, homohexamer. Mg(2+) is required as a cofactor.

It localises to the cytoplasm. The catalysed reaction is (R)-4'-phosphopantetheine + ATP + H(+) = 3'-dephospho-CoA + diphosphate. It functions in the pathway cofactor biosynthesis; coenzyme A biosynthesis; CoA from (R)-pantothenate: step 4/5. Its function is as follows. Reversibly transfers an adenylyl group from ATP to 4'-phosphopantetheine, yielding dephospho-CoA (dPCoA) and pyrophosphate. The sequence is that of Phosphopantetheine adenylyltransferase from Synechococcus sp. (strain CC9311).